Consider the following 76-residue polypeptide: uncharacterized protein (76 aa).

An N-terminal signal peptide occupies residues 1 to 20 (MKNAVLVFLLLSVFALSVNA).

In terms of tissue distribution, prismatic layer of shell (at protein level). Expressed primarily in the mantle with equal levels in the mantle edge and the mantle pallium.

The protein resides in the secreted. This is an uncharacterized protein from Margaritifera margaritifera (Freshwater pearl mussel).